The primary structure comprises 335 residues: D-alanine--D-alanine ligase (335 aa).

The region spanning 124–330 is the ATP-grasp domain; sequence KMWFSALGVP…FTEYLSDVIS (207 aa). 154–209 is a binding site for ATP; it reads AFDTWGSVFIKAASQGSSVGCYKVDVRDNIAKVLEEAFGYAPYVVVEKTIKARELE. Mg(2+)-binding residues include Asp284, Glu297, and Asn299.

The protein belongs to the D-alanine--D-alanine ligase family. Requires Mg(2+) as cofactor. It depends on Mn(2+) as a cofactor.

Its subcellular location is the cytoplasm. The enzyme catalyses 2 D-alanine + ATP = D-alanyl-D-alanine + ADP + phosphate + H(+). It participates in cell wall biogenesis; peptidoglycan biosynthesis. Its function is as follows. Cell wall formation. This is D-alanine--D-alanine ligase from Shewanella denitrificans (strain OS217 / ATCC BAA-1090 / DSM 15013).